We begin with the raw amino-acid sequence, 101 residues long: Urease subunit beta (101 aa).

The protein belongs to the urease beta subunit family. In terms of assembly, heterotrimer of UreA (gamma), UreB (beta) and UreC (alpha) subunits. Three heterotrimers associate to form the active enzyme.

The protein resides in the cytoplasm. It carries out the reaction urea + 2 H2O + H(+) = hydrogencarbonate + 2 NH4(+). The protein operates within nitrogen metabolism; urea degradation; CO(2) and NH(3) from urea (urease route): step 1/1. This chain is Urease subunit beta, found in Azoarcus sp. (strain BH72).